A 308-amino-acid chain; its full sequence is Ornithine carbamoyltransferase (308 aa).

Carbamoyl phosphate-binding positions include 56-59 (STRT), Gln-83, Arg-107, and 134-137 (HPCQ). L-ornithine-binding positions include Asn-165, Asp-225, and 229–230 (SM). Carbamoyl phosphate contacts are provided by residues 266 to 267 (CL) and Arg-294.

It belongs to the aspartate/ornithine carbamoyltransferase superfamily. OTCase family.

The protein resides in the cytoplasm. It carries out the reaction carbamoyl phosphate + L-ornithine = L-citrulline + phosphate + H(+). The protein operates within amino-acid biosynthesis; L-arginine biosynthesis; L-arginine from L-ornithine and carbamoyl phosphate: step 1/3. Reversibly catalyzes the transfer of the carbamoyl group from carbamoyl phosphate (CP) to the N(epsilon) atom of ornithine (ORN) to produce L-citrulline. This is Ornithine carbamoyltransferase from Ruegeria pomeroyi (strain ATCC 700808 / DSM 15171 / DSS-3) (Silicibacter pomeroyi).